The following is a 126-amino-acid chain: MMDSTGMGCWGEERVLRLLQKRGWQLVSQRWSCRYGELDLVVEKQQRVLVVEVKSRRSRGLDHWGLCAFNKGKQLRLMRAIGCWLATHPYFAEHSLELVMALVPLPPSQNTLDWIRIDDLDIDAAD.

It belongs to the UPF0102 family.

This Prochlorococcus marinus (strain MIT 9313) protein is UPF0102 protein PMT_0624.